A 294-amino-acid polypeptide reads, in one-letter code: MAQTGTDRVKRGMAEMQKGGVIMDVVNAEQAKIAEEAGAVAVMALERVPADIRAAGGVARMADPTIVEEVMNAVSIPVMAKARIGHIVEARVLEALGVDYIDESEVLTPADEEFHLNKNEFTVPFVCGCRDLGEATRRIAEGASMLRTKGEPGTGNIVEAVRHMRKVNAQVRKVVGMSDDELMTEAKNLGAPYELLKEIKAEGRLPVVNFAAGGVATPADAALMMQLGADGVFVGSGIFKSDNPAKFAKAIVEATTHFTDYKLIAELSKELGTAMKGIEISNLLPEQRMQERGW.

D-ribose 5-phosphate is bound at residue D24. K81 (schiff-base intermediate with D-ribose 5-phosphate) is an active-site residue. G153 lines the D-ribose 5-phosphate pocket. R165 contributes to the D-glyceraldehyde 3-phosphate binding site. Residues G214 and 235 to 236 (GS) contribute to the D-ribose 5-phosphate site.

Belongs to the PdxS/SNZ family. In the presence of PdxT, forms a dodecamer of heterodimers.

The catalysed reaction is aldehydo-D-ribose 5-phosphate + D-glyceraldehyde 3-phosphate + L-glutamine = pyridoxal 5'-phosphate + L-glutamate + phosphate + 3 H2O + H(+). Its pathway is cofactor biosynthesis; pyridoxal 5'-phosphate biosynthesis. Its function is as follows. Catalyzes the formation of pyridoxal 5'-phosphate from ribose 5-phosphate (RBP), glyceraldehyde 3-phosphate (G3P) and ammonia. The ammonia is provided by the PdxT subunit. Can also use ribulose 5-phosphate and dihydroxyacetone phosphate as substrates, resulting from enzyme-catalyzed isomerization of RBP and G3P, respectively. This Bacillus licheniformis (strain ATCC 14580 / DSM 13 / JCM 2505 / CCUG 7422 / NBRC 12200 / NCIMB 9375 / NCTC 10341 / NRRL NRS-1264 / Gibson 46) protein is Pyridoxal 5'-phosphate synthase subunit PdxS.